A 240-amino-acid polypeptide reads, in one-letter code: Phosphoribosylaminoimidazole-succinocarboxamide synthase (240 aa).

The protein belongs to the SAICAR synthetase family.

It carries out the reaction 5-amino-1-(5-phospho-D-ribosyl)imidazole-4-carboxylate + L-aspartate + ATP = (2S)-2-[5-amino-1-(5-phospho-beta-D-ribosyl)imidazole-4-carboxamido]succinate + ADP + phosphate + 2 H(+). It functions in the pathway purine metabolism; IMP biosynthesis via de novo pathway; 5-amino-1-(5-phospho-D-ribosyl)imidazole-4-carboxamide from 5-amino-1-(5-phospho-D-ribosyl)imidazole-4-carboxylate: step 1/2. This is Phosphoribosylaminoimidazole-succinocarboxamide synthase from Neorickettsia sennetsu (strain ATCC VR-367 / Miyayama) (Ehrlichia sennetsu).